The primary structure comprises 277 residues: 3-methyl-2-oxobutanoate hydroxymethyltransferase (277 aa).

The Mg(2+) site is built by Asp53 and Asp96. 3-methyl-2-oxobutanoate contacts are provided by residues 53-54 (DS), Asp96, and Lys126. Glu128 provides a ligand contact to Mg(2+). The active-site Proton acceptor is Glu195.

The protein belongs to the PanB family. As to quaternary structure, homodecamer; pentamer of dimers. Mg(2+) is required as a cofactor.

Its subcellular location is the cytoplasm. The enzyme catalyses 3-methyl-2-oxobutanoate + (6R)-5,10-methylene-5,6,7,8-tetrahydrofolate + H2O = 2-dehydropantoate + (6S)-5,6,7,8-tetrahydrofolate. The protein operates within cofactor biosynthesis; (R)-pantothenate biosynthesis; (R)-pantoate from 3-methyl-2-oxobutanoate: step 1/2. Its function is as follows. Catalyzes the reversible reaction in which hydroxymethyl group from 5,10-methylenetetrahydrofolate is transferred onto alpha-ketoisovalerate to form ketopantoate. The sequence is that of 3-methyl-2-oxobutanoate hydroxymethyltransferase from Chlorobium luteolum (strain DSM 273 / BCRC 81028 / 2530) (Pelodictyon luteolum).